A 372-amino-acid polypeptide reads, in one-letter code: F-box/kelch-repeat protein At5g48990 (372 aa).

One can recognise an F-box domain in the interval 14–60 (SSPNPSLPEDLIVSILARVSRSYYTNLSVVSKTFRSILTSPELYKTR). A Kelch repeat occupies 176 to 222 (RTYFPGSSEKPDSLNCVEVYNTNTQTWNPVPPQKRKLKFGNMEGKIY).

The chain is F-box/kelch-repeat protein At5g48990 from Arabidopsis thaliana (Mouse-ear cress).